The following is a 126-amino-acid chain: Probable DNA-directed RNA polymerase II subunit RPB11 (126 aa).

The protein belongs to the archaeal Rpo11/eukaryotic RPB11/RPC19 RNA polymerase subunit family. Component of the RNA polymerase II (Pol II) complex consisting of 12 subunits.

The protein resides in the nucleus. In terms of biological role, DNA-dependent RNA polymerase catalyzes the transcription of DNA into RNA using the four ribonucleoside triphosphates as substrates. Component of RNA polymerase II which synthesizes mRNA precursors and many functional non-coding RNAs. Pol II is the central component of the basal RNA polymerase II transcription machinery. It is composed of mobile elements that move relative to each other. RPB11 is part of the core element with the central large cleft. The protein is Probable DNA-directed RNA polymerase II subunit RPB11 of Plasmodium chabaudi chabaudi.